The primary structure comprises 872 residues: Sine oculis-binding protein homolog (872 aa).

The span at 1–14 (MAEMEKEGRPPENK) shows a compositional bias: basic and acidic residues. Residues 1 to 26 (MAEMEKEGRPPENKRSRKPAHPVKRE) are disordered. 2 FCS-type zinc fingers span residues 142–180 (DDVS…KCFA) and 216–256 (FKNN…KCLN). 3 disordered regions span residues 308–354 (RRKA…KSMP), 411–484 (FIRG…PGAP), and 550–619 (KPPN…GRSE). Residues 319-344 (GQSQGPGPSASTTVSPSDTANCSVTK) are compositionally biased toward polar residues. A compositionally biased stretch (low complexity) spans 417–433 (HHASNPNSPLSNPMLPG). The segment covering 460 to 484 (IHPPSTPTMPGNPPGLLPPPPPGAP) has biased composition (pro residues). The short motif at 620-624 (VVDLT) is the SUMO interaction motif 1 (SIM); mediates the binding to polysumoylated substrates element. Residue S629 is modified to Phosphoserine. The SUMO interaction motif 2 (SIM); mediates the binding to polysumoylated substrates signature appears at 651 to 655 (VIDLT). A Glycyl lysine isopeptide (Lys-Gly) (interchain with G-Cter in SUMO2) cross-link involves residue K675. S697 is modified (phosphoserine). Positions 728-770 (AAEGAKGAEPPPEQPPPPPPPPPAPPKKLLSPEEPAVSELESV) are disordered. The segment covering 736 to 753 (EPPPEQPPPPPPPPPAPP) has biased composition (pro residues).

Belongs to the SOBP family. Interacts (via SIM domains) with SUMO1 and SUMO2.

Implicated in development of the cochlea. This Bos taurus (Bovine) protein is Sine oculis-binding protein homolog.